Here is a 315-residue protein sequence, read N- to C-terminus: Tyrosine--tRNA ligase (315 aa).

Y32 contributes to the L-tyrosine binding site. The short motif at P37–H45 is the 'HIGH' region element. 4 residues coordinate L-tyrosine: Y152, Q156, D159, and Q174. A 'KMSKS' region motif is present at residues K208–S212. S211 provides a ligand contact to ATP.

The protein belongs to the class-I aminoacyl-tRNA synthetase family. TyrS type 3 subfamily. As to quaternary structure, homodimer.

It localises to the cytoplasm. It carries out the reaction tRNA(Tyr) + L-tyrosine + ATP = L-tyrosyl-tRNA(Tyr) + AMP + diphosphate + H(+). Its function is as follows. Catalyzes the attachment of tyrosine to tRNA(Tyr) in a two-step reaction: tyrosine is first activated by ATP to form Tyr-AMP and then transferred to the acceptor end of tRNA(Tyr). This is Tyrosine--tRNA ligase from Methanoculleus marisnigri (strain ATCC 35101 / DSM 1498 / JR1).